We begin with the raw amino-acid sequence, 379 residues long: Cinnamyl alcohol dehydrogenase 7 (379 aa).

The segment covering 1–13 (MAPTTTATAAAEQ) has biased composition (low complexity). Residues 1–21 (MAPTTTATAAAEQAPPPQHTR) are disordered. Cys-60 is a Zn(2+) binding site. Ser-62 is an NADP(+) binding site. The Zn(2+) site is built by His-82, Glu-83, Cys-113, Cys-116, Cys-119, Cys-127, and Cys-185. Residues Thr-189, 210-215 (GLGGLG), 233-238 (STSPVK), Thr-273, Gly-297, and 320-322 (SCM) contribute to the NADP(+) site.

This sequence belongs to the zinc-containing alcohol dehydrogenase family. As to quaternary structure, homodimer. Zn(2+) serves as cofactor. As to expression, expressed in roots, first internodes and panicles. Expressed in the vascular bundles and sclerenchyma cells below the epidermis in leaves and stems.

The enzyme catalyses (E)-cinnamyl alcohol + NADP(+) = (E)-cinnamaldehyde + NADPH + H(+). The catalysed reaction is (E)-coniferol + NADP(+) = (E)-coniferaldehyde + NADPH + H(+). It catalyses the reaction (E)-sinapyl alcohol + NADP(+) = (E)-sinapaldehyde + NADPH + H(+). It carries out the reaction (E)-4-coumaroyl alcohol + NADP(+) = (E)-4-coumaraldehyde + NADPH + H(+). The enzyme catalyses (E)-caffeyl alcohol + NADP(+) = (E)-caffeyl aldehyde + NADPH + H(+). Its pathway is aromatic compound metabolism; phenylpropanoid biosynthesis. In terms of biological role, involved in lignin biosynthesis. May catalyze the final step specific for the production of lignin monomers, like coniferyl alcohol, sinapyl alcohol and 4-coumaryl alcohol. This Oryza sativa subsp. japonica (Rice) protein is Cinnamyl alcohol dehydrogenase 7.